Here is a 337-residue protein sequence, read N- to C-terminus: G-protein coupled receptor 26 (337 aa).

Residues 1 to 10 (MNSWDAGLAG) lie on the Extracellular side of the membrane. Residues 11–31 (LLVGTIGVSLLSNGLVLLCLL) traverse the membrane as a helical segment. Over 32-47 (HSADIRRQAPALFTLN) the chain is Cytoplasmic. The helical transmembrane segment at 48-68 (LTCGNLLCTVVNMPLTLAGVV) threads the bilayer. Residues 69–81 (AQRQPAGDRLCRL) lie on the Extracellular side of the membrane. A disulfide bridge connects residues Cys-79 and Cys-156. The chain crosses the membrane as a helical span at residues 82–102 (AAFLDTFLAANSMLSMAALSI). Residues 103-123 (DRWVAVVFPLSYRAKMRLRDA) lie on the Cytoplasmic side of the membrane. A helical transmembrane segment spans residues 124 to 144 (AFMVAYTWLHALTFPATALAL). Residues 145-168 (SWLGFHQLYASCTLCSRRPDERLR) are Extracellular-facing. The chain crosses the membrane as a helical span at residues 169 to 189 (FAVFTSAFHALSFLLSFIVLC). Topologically, residues 190–245 (FTYLKVLKVARFHCKRIDVITMQTLVLLVDIHPSVRERCLEEQKRRRQRATKKIST) are cytoplasmic. Residues 246 to 266 (FIGTFLVCFAPYVITRLVELF) form a helical membrane-spanning segment. The Extracellular segment spans residues 267–276 (STAPIGSHWG). The chain crosses the membrane as a helical span at residues 277 to 297 (VLSKCLAYSKAASDPFVYSLL). The Cytoplasmic segment spans residues 298–337 (RHQYRRSCKELLNRIFNRRSLHSVGLTGDSHSQNILPVSE).

It belongs to the G-protein coupled receptor 1 family. As to expression, exclusively expressed in the brain. Prominent expression is detected throughout the entire neocortex at all rostrocaudal and dorsoventral levels. Strong expression is detected in olfactory and auditory sensory areas.

Its subcellular location is the cell membrane. Its function is as follows. Orphan receptor. Displays a significant level of constitutive activity. Its effect is mediated by G(s)-alpha protein that stimulate adenylate cyclase, resulting in an elevation of intracellular cAMP. The sequence is that of G-protein coupled receptor 26 (Gpr26) from Mus musculus (Mouse).